Reading from the N-terminus, the 258-residue chain is Imidazole glycerol phosphate synthase subunit HisF (258 aa).

Catalysis depends on residues Asp11 and Asp130.

This sequence belongs to the HisA/HisF family. Heterodimer of HisH and HisF.

The protein localises to the cytoplasm. It carries out the reaction 5-[(5-phospho-1-deoxy-D-ribulos-1-ylimino)methylamino]-1-(5-phospho-beta-D-ribosyl)imidazole-4-carboxamide + L-glutamine = D-erythro-1-(imidazol-4-yl)glycerol 3-phosphate + 5-amino-1-(5-phospho-beta-D-ribosyl)imidazole-4-carboxamide + L-glutamate + H(+). Its pathway is amino-acid biosynthesis; L-histidine biosynthesis; L-histidine from 5-phospho-alpha-D-ribose 1-diphosphate: step 5/9. Its function is as follows. IGPS catalyzes the conversion of PRFAR and glutamine to IGP, AICAR and glutamate. The HisF subunit catalyzes the cyclization activity that produces IGP and AICAR from PRFAR using the ammonia provided by the HisH subunit. This Citrobacter koseri (strain ATCC BAA-895 / CDC 4225-83 / SGSC4696) protein is Imidazole glycerol phosphate synthase subunit HisF.